A 354-amino-acid polypeptide reads, in one-letter code: Bergaptol O-methyltransferase (354 aa).

Histidine 121 lines the bergaptol pocket. Positions 174, 198, 221, and 255 each coordinate S-adenosyl-L-homocysteine. Residue histidine 259 coordinates bergaptol. Histidine 259 (proton acceptor) is an active-site residue.

Belongs to the class I-like SAM-binding methyltransferase superfamily. Cation-independent O-methyltransferase family. COMT subfamily.

It catalyses the reaction a 5-hydroxyfurocoumarin + S-adenosyl-L-methionine = a 5-methoxyfurocoumarin + S-adenosyl-L-homocysteine + H(+). It carries out the reaction bergaptol + S-adenosyl-L-methionine = bergapten + S-adenosyl-L-homocysteine. Inhibited by Cu(2+), Ni(2+) and Co(2+). The polypeptide is Bergaptol O-methyltransferase (Ammi majus (Bishop's weed)).